The following is a 674-amino-acid chain: Pesticidal crystal protein Cry24Aa (674 aa).

This sequence belongs to the delta endotoxin family.

Its function is as follows. Promotes colloidosmotic lysis by binding to the midgut epithelial cells of insects. This is Pesticidal crystal protein Cry24Aa (cry24Aa) from Bacillus thuringiensis subsp. jegathesan.